Reading from the N-terminus, the 78-residue chain is Defensin-like protein 287 (78 aa).

The N-terminal stretch at 1–24 (MNNLRVIMSVLLAVLVFTATVSES) is a signal peptide. 3 cysteine pairs are disulfide-bonded: C39–C59, C45–C64, and C51–C66.

Belongs to the DEFL family.

The protein resides in the secreted. This is Defensin-like protein 287 from Arabidopsis thaliana (Mouse-ear cress).